We begin with the raw amino-acid sequence, 382 residues long: Putative UDP-sugar transporter DDB_G0278631 (382 aa).

7 helical membrane-spanning segments follow: residues 117 to 137 (FSASNFLLFNQMVVTIVILHI), 183 to 203 (MYSALKRLVAVVILVMEYFIL), 211 to 231 (IIASVVVMVIGAVVAGITDLS), 234 to 254 (SLGYSLVLLSCIFQASYLIYV), 264 to 284 (YDMLYYNSVLSLPITIFLMIV), 302 to 322 (FQAYFILSIFLGFFLNFCIFF), and 354 to 374 (IIIHPINILGLIINIIGSIWY).

This sequence belongs to the TPT transporter family. SLC35D subfamily.

Its subcellular location is the membrane. May be nvolved in the import of UDP-sugars. The chain is Putative UDP-sugar transporter DDB_G0278631 from Dictyostelium discoideum (Social amoeba).